We begin with the raw amino-acid sequence, 286 residues long: Protein NipSnap homolog 2 (286 aa).

The N-terminal 23 residues, 1–23 (MAARVLRARGAAWAGGLLQRAAP), are a transit peptide targeting the mitochondrion.

This sequence belongs to the NipSnap family. In terms of assembly, interacts with CALCOCO2/NDP52, NBR1, SQSTM1/p62, TAX1BP1 and WDFY3/ALFY. Interacts with ATG8 family proteins (MAP1LC3A, MAP1LC3B, MAP1LC3C, GABARAP, GABARAPL1 and GABARAPL2). Interacts with VDAC1. As to expression, widely expressed. Most abundant in heart and skeletal muscle.

The protein resides in the mitochondrion matrix. Protein involved in mitophagy by facilitating recruitment of the autophagy machinery required for clearance of damaged mitochondria. Accumulates on the mitochondria surface in response to mitochondrial depolarization and acts as a 'eat me' signal by recruiting proteins involved in selective autophagy, such as autophagy receptors (CALCOCO2/NDP52, NBR1, SQSTM1/p62, TAX1BP1 and WDFY3/ALFY) and ATG8 family proteins (MAP1LC3A, MAP1LC3B, MAP1LC3C, GABARAP, GABARAPL1 and GABARAPL2). This Homo sapiens (Human) protein is Protein NipSnap homolog 2.